A 20-amino-acid polypeptide reads, in one-letter code: Unknown protein from 2D-PAGE (20 aa).

This Nicotiana tabacum (Common tobacco) protein is Unknown protein from 2D-PAGE.